The chain runs to 267 residues: Small ribosomal subunit protein uS2 (267 aa).

The interval 237-267 is disordered; that stretch reads IGESAAAPSEPALETASAEATAEGEQPGSQA. Positions 238-261 are enriched in low complexity; the sequence is GESAAAPSEPALETASAEATAEGE.

This sequence belongs to the universal ribosomal protein uS2 family.

The sequence is that of Small ribosomal subunit protein uS2 from Chelativorans sp. (strain BNC1).